Consider the following 795-residue polypeptide: Mitochondrial inner membrane m-AAA protease component paraplegin (795 aa).

The N-terminal 43 residues, 1-43 (MAVLLLLLRALRRGPGPGPRPLWGPGPAWSPGFPARPGRGRPY), are a transit peptide targeting the mitochondrion. Positions 44–105 (MASRPPGDLA…GGTFYFNTSR (62 aa)) are cleaved as a propeptide — removed in mature form. Residues 106–144 (LKQKNKEKDKSKGKAPEEDEEERRRRERDDQMYRERLRT) are Mitochondrial matrix-facing. The segment at 108-133 (QKNKEKDKSKGKAPEEDEEERRRRER) is disordered. Residues 109–133 (KNKEKDKSKGKAPEEDEEERRRRER) are compositionally biased toward basic and acidic residues. Residues 145-165 (LLVIAVVMSLLNALSTSGGSI) form a helical membrane-spanning segment. The Mitochondrial intermembrane segment spans residues 166–248 (SWNDFVHEML…DRIPVSYKRT (83 aa)). Residues 249-269 (GFFGNALYSVGMTAVGLAILW) traverse the membrane as a helical segment. The Mitochondrial matrix segment spans residues 270–795 (YVFRLAGMTG…LGGEEPTWPK (526 aa)). The ATP site is built by alanine 312, glycine 352, cysteine 353, glycine 354, lysine 355, threonine 356, and leucine 357. Tyrosine 505 carries the post-translational modification 3'-nitrotyrosine. Histidine 574 serves as a coordination point for Zn(2+). Glutamate 575 is a catalytic residue. Histidine 578 and aspartate 650 together coordinate Zn(2+). Residues 701–795 (HEARLLVAKA…LGGEEPTWPK (95 aa)) are interaction with PPIF. Positions 751–795 (PHGPKKMIAPQRWIDAQREKQDLGEEETEETQQPPLGGEEPTWPK) are disordered.

This sequence in the N-terminal section; belongs to the AAA ATPase family. The protein in the C-terminal section; belongs to the peptidase M41 family. In terms of assembly, forms heterooligomers with AFG3L2; the m-AAA protease is composed of heterohexamers of AFG3L2 and SPG7. Component of the mitochondrial permeability transition pore complex (mPTPC), at least composed of SPG7, VDAC1 and PPIF. Interacts with MAIP1. Zn(2+) is required as a cofactor. Post-translationally, upon import into the mitochondrion, the N-terminal transit peptide is cleaved by the mitochondrial-processing peptidase (MPP) to generate an intermediate form which undergoes a second proteolytic cleavage mediated by proteases AFG3L2 removing an additional N-terminal fragment to generate the proteolytically active mature form. As to expression, ubiquitous.

It localises to the mitochondrion inner membrane. It carries out the reaction ATP + H2O = ADP + phosphate + H(+). Functionally, catalytic component of the m-AAA protease, a protease that plays a key role in proteostasis of inner mitochondrial membrane proteins, and which is essential for axonal and neuron development. SPG7 possesses both ATPase and protease activities: the ATPase activity is required to unfold substrates, threading them into the internal proteolytic cavity for hydrolysis into small peptide fragments. The m-AAA protease exerts a dual role in the mitochondrial inner membrane: it mediates the processing of specific regulatory proteins and ensures protein quality control by degrading misfolded polypeptides. Mediates protein maturation of the mitochondrial ribosomal subunit MRPL32/bL32m by catalyzing the cleavage of the presequence of MRPL32/bL32m prior to assembly into the mitochondrial ribosome. Acts as a regulator of calcium in neurons by mediating degradation of SMDT1/EMRE before its assembly with the uniporter complex, limiting the availability of SMDT1/EMRE for MCU assembly and promoting efficient assembly of gatekeeper subunits with MCU. Also regulates mitochondrial calcium by catalyzing degradation of MCU. Plays a role in the formation and regulation of the mitochondrial permeability transition pore (mPTP) and its proteolytic activity is dispensable for this function. This Homo sapiens (Human) protein is Mitochondrial inner membrane m-AAA protease component paraplegin.